We begin with the raw amino-acid sequence, 463 residues long: General transcription factor IIH subunit 4 (463 aa).

The protein belongs to the TFB2 family. As to quaternary structure, component of the 7-subunit TFIIH core complex composed of XPB/ERCC3, XPD/ERCC2, GTF2H1, GTF2H2, GTF2H3, GTF2H4 and GTF2H5, which is active in NER. The core complex associates with the 3-subunit CDK-activating kinase (CAK) module composed of CCNH/cyclin H, CDK7 and MNAT1 to form the 10-subunit holoenzyme (holo-TFIIH) active in transcription. Part of TBP-based Pol II pre-initiation complex (PIC), in which Pol II core assembles with general transcription factors and other specific initiation factors including GTF2E1, GTF2E2, GTF2F1, GTF2F2, TCEA1, ERCC2, ERCC3, GTF2H2, GTF2H3, GTF2H4, GTF2H5, GTF2A1, GTF2A2, GTF2B and TBP; this large multi-subunit PIC complex mediates DNA unwinding and targets Pol II core to the transcription start site where the first phosphodiester bond forms.

Its subcellular location is the nucleus. Functionally, component of the general transcription and DNA repair factor IIH (TFIIH) core complex, which is involved in general and transcription-coupled nucleotide excision repair (NER) of damaged DNA and, when complexed to CAK, in RNA transcription by RNA polymerase II. In NER, TFIIH acts by opening DNA around the lesion to allow the excision of the damaged oligonucleotide and its replacement by a new DNA fragment. In transcription, TFIIH has an essential role in transcription initiation. When the pre-initiation complex (PIC) has been established, TFIIH is required for promoter opening and promoter escape. Phosphorylation of the C-terminal tail (CTD) of the largest subunit of RNA polymerase II by the kinase module CAK controls the initiation of transcription. In Mus musculus (Mouse), this protein is General transcription factor IIH subunit 4 (Gtf2h4).